Consider the following 143-residue polypeptide: Translation initiation factor 2 subunit beta (143 aa).

This sequence belongs to the eIF-2-beta/eIF-5 family. In terms of assembly, heterotrimer composed of an alpha, a beta and a gamma chain.

EIF-2 functions in the early steps of protein synthesis by forming a ternary complex with GTP and initiator tRNA. The polypeptide is Translation initiation factor 2 subunit beta (eif2b) (Methanocaldococcus jannaschii (strain ATCC 43067 / DSM 2661 / JAL-1 / JCM 10045 / NBRC 100440) (Methanococcus jannaschii)).